Consider the following 210-residue polypeptide: Large ribosomal subunit protein uL3 (210 aa).

Residues 126–167 (WGFQRGPSGHGSKNIREPGSTGNATFPGRVIKGKKMPGQKGN) form a disordered region. Residues 156 to 167 (IKGKKMPGQKGN) show a composition bias toward basic residues.

The protein belongs to the universal ribosomal protein uL3 family. Part of the 50S ribosomal subunit. Forms a cluster with proteins L14 and L19.

One of the primary rRNA binding proteins, it binds directly near the 3'-end of the 23S rRNA, where it nucleates assembly of the 50S subunit. The chain is Large ribosomal subunit protein uL3 from Syntrophobacter fumaroxidans (strain DSM 10017 / MPOB).